A 207-amino-acid chain; its full sequence is Guanylate kinase (207 aa).

Residues 3-181 (GLLFVVSAAS…ALHDLESVIT (179 aa)) enclose the Guanylate kinase-like domain. Residue 10–17 (AASGTGKT) participates in ATP binding.

This sequence belongs to the guanylate kinase family.

The protein localises to the cytoplasm. The catalysed reaction is GMP + ATP = GDP + ADP. Essential for recycling GMP and indirectly, cGMP. This chain is Guanylate kinase, found in Acinetobacter baylyi (strain ATCC 33305 / BD413 / ADP1).